The chain runs to 374 residues: Probable quinol oxidase subunit 2 (374 aa).

The N-terminal stretch at methionine 1–glycine 19 is a signal peptide. Residue cysteine 20 is the site of N-palmitoyl cysteine attachment. The S-diacylglycerol cysteine moiety is linked to residue cysteine 20. 2 consecutive transmembrane segments (helical) span residues serine 43–phenylalanine 63 and isoleucine 82–valine 102. The disordered stretch occupies residues glutamate 317–histidine 374. A compositionally biased stretch (basic and acidic residues) spans glutamate 330–histidine 374.

Belongs to the cytochrome c oxidase subunit 2 family.

The protein resides in the cell membrane. It catalyses the reaction 2 a quinol + O2 = 2 a quinone + 2 H2O. Functionally, catalyzes quinol oxidation with the concomitant reduction of oxygen to water. Subunit II transfers the electrons from a quinol to the binuclear center of the catalytic subunit I. This is Probable quinol oxidase subunit 2 (qoxA) from Staphylococcus epidermidis (strain ATCC 12228 / FDA PCI 1200).